Here is a 229-residue protein sequence, read N- to C-terminus: Heptaprenylglyceryl phosphate synthase (229 aa).

The Mg(2+) site is built by Asp13 and Thr39.

It belongs to the GGGP/HepGP synthase family. Homodimer. The cofactor is Mg(2+).

The enzyme catalyses sn-glycerol 1-phosphate + all-trans-heptaprenyl diphosphate = 3-heptaprenyl-sn-glycero-1-phosphate + diphosphate. Its pathway is membrane lipid metabolism; glycerophospholipid metabolism. Prenyltransferase that catalyzes in vivo the transfer of the heptaprenyl moiety of heptaprenyl pyrophosphate (HepPP; 35 carbon atoms) to the C3 hydroxyl of sn-glycerol-1-phosphate (G1P), producing heptaprenylglyceryl phosphate (HepGP). This reaction is an ether-bond-formation step in the biosynthesis of archaea-type G1P-based membrane lipids found in Bacillales. The sequence is that of Heptaprenylglyceryl phosphate synthase from Lysinibacillus sphaericus (strain C3-41).